Reading from the N-terminus, the 92-residue chain is Signal recognition particle 19 kDa protein (92 aa).

Belongs to the SRP19 family. In terms of assembly, part of the signal recognition particle protein translocation system, which is composed of SRP and FtsY. Archaeal SRP consists of a 7S RNA molecule of 300 nucleotides and two protein subunits: SRP54 and SRP19.

The protein localises to the cytoplasm. Functionally, involved in targeting and insertion of nascent membrane proteins into the cytoplasmic membrane. Binds directly to 7S RNA and mediates binding of the 54 kDa subunit of the SRP. In Halobacterium salinarum (strain ATCC 29341 / DSM 671 / R1), this protein is Signal recognition particle 19 kDa protein.